Consider the following 163-residue polypeptide: ATP synthase subunit b', chloroplastic (163 aa).

Residues 26–46 (ATLPLMALQFILLTVILTFVF) form a helical membrane-spanning segment.

This sequence belongs to the ATPase B chain family. In terms of assembly, F-type ATPases have 2 components, F(1) - the catalytic core - and F(0) - the membrane proton channel. F(1) has five subunits: alpha(3), beta(3), gamma(1), delta(1), epsilon(1). F(0) has four main subunits: a(1), b(1), b'(1) and c(10-14). The alpha and beta chains form an alternating ring which encloses part of the gamma chain. F(1) is attached to F(0) by a central stalk formed by the gamma and epsilon chains, while a peripheral stalk is formed by the delta, b and b' chains.

The protein localises to the plastid. It localises to the chloroplast thylakoid membrane. Functionally, f(1)F(0) ATP synthase produces ATP from ADP in the presence of a proton or sodium gradient. F-type ATPases consist of two structural domains, F(1) containing the extramembraneous catalytic core and F(0) containing the membrane proton channel, linked together by a central stalk and a peripheral stalk. During catalysis, ATP synthesis in the catalytic domain of F(1) is coupled via a rotary mechanism of the central stalk subunits to proton translocation. Component of the F(0) channel, it forms part of the peripheral stalk, linking F(1) to F(0). The b'-subunit is a diverged and duplicated form of b found in plants and photosynthetic bacteria. This Ochrosphaera neapolitana protein is ATP synthase subunit b', chloroplastic.